Consider the following 58-residue polypeptide: Large ribosomal subunit protein bL32 (58 aa).

This sequence belongs to the bacterial ribosomal protein bL32 family.

The sequence is that of Large ribosomal subunit protein bL32 from Carboxydothermus hydrogenoformans (strain ATCC BAA-161 / DSM 6008 / Z-2901).